A 282-amino-acid chain; its full sequence is Putative glycosyltransferase HI_0765 (282 aa).

This sequence belongs to the glycosyltransferase 25 family.

The chain is Putative glycosyltransferase HI_0765 from Haemophilus influenzae (strain ATCC 51907 / DSM 11121 / KW20 / Rd).